The primary structure comprises 239 residues: uncharacterized protein (239 aa).

A run of 8 helical transmembrane segments spans residues 4–24 (LIPK…LGMV), 29–49 (VIWH…VYPV), 61–81 (YQKW…ISVF), 84–104 (PPLI…MYFA), 116–136 (VAGV…GMGT), 139–159 (GWAW…SFYV), 180–200 (LLLP…AFIP), and 218–238 (IGIL…LFIT).

It to H.influenzae HI_1626.

Its subcellular location is the cell membrane. This is an uncharacterized protein from Bacillus subtilis (strain 168).